A 487-amino-acid polypeptide reads, in one-letter code: Schwannomin-interacting protein 1 (487 aa).

Disordered stretches follow at residues 1–74 (MERS…VSAL), 88–221 (VIDE…PVPP), 236–260 (FREQ…NERE), and 308–354 (SGSD…SLDD). The span at 14–27 (DQGKHSDSDYREDG) shows a compositional bias: basic and acidic residues. Positions 32 to 67 (SDAGSSSSSSRASSQSNSTKVTPCSECKSSSSPGGS) are enriched in low complexity. Acidic residues predominate over residues 92-106 (WAPEEDGEEEEEEDE). Basic and acidic residues-rich tracts occupy residues 107–123 (RDQR…REPG) and 153–162 (HQHDPQDLRH). S117 carries the post-translational modification Phosphoserine. Residues 242-255 (RNQGQARTNSTSAQ) show a composition bias toward polar residues. Positions 309–323 (GSDKDSDADDSKTET) are enriched in basic and acidic residues. Polar residues predominate over residues 324 to 335 (SLDTPLSPMSKQ). The span at 344-354 (TTEEESESLDD) shows a compositional bias: acidic residues. The stretch at 424–458 (IGQLQVIVNDLHSQIESLNEELVQLLLIRDELHTE) forms a coiled coil.

Belongs to the SCHIP1 family. Homooligomer (via coiled coil domain). Interacts with NF2; the interaction is direct. Interacts with ANK3. As to expression, preferentially expressed in brain, skeletal muscles and heart. Also expressed in detected in pancreas, kidney, liver, lung, and placenta.

It localises to the cytoplasm. This chain is Schwannomin-interacting protein 1, found in Homo sapiens (Human).